The chain runs to 321 residues: Biotin synthase (321 aa).

Residues Arg37–Arg264 form the Radical SAM core domain. Cys52, Cys56, and Cys59 together coordinate [4Fe-4S] cluster. Residues Cys96, Cys127, Cys187, and Arg259 each coordinate [2Fe-2S] cluster.

It belongs to the radical SAM superfamily. Biotin synthase family. Homodimer. Requires [4Fe-4S] cluster as cofactor. It depends on [2Fe-2S] cluster as a cofactor.

It catalyses the reaction (4R,5S)-dethiobiotin + (sulfur carrier)-SH + 2 reduced [2Fe-2S]-[ferredoxin] + 2 S-adenosyl-L-methionine = (sulfur carrier)-H + biotin + 2 5'-deoxyadenosine + 2 L-methionine + 2 oxidized [2Fe-2S]-[ferredoxin]. It functions in the pathway cofactor biosynthesis; biotin biosynthesis; biotin from 7,8-diaminononanoate: step 2/2. Functionally, catalyzes the conversion of dethiobiotin (DTB) to biotin by the insertion of a sulfur atom into dethiobiotin via a radical-based mechanism. The chain is Biotin synthase from Coxiella burnetii (strain CbuK_Q154) (Coxiella burnetii (strain Q154)).